A 564-amino-acid polypeptide reads, in one-letter code: MSGDSKVWAHASADTWAVQNGISTYDLDTSSIKREKRDHNEQFNDGYGPPPGSASADPASYIADPAAFYNLYTNMGGAPTSTPMMHHEMGEAMKRDKESIYAHPLYPLLVLLFEKCELATSTPRDTSRDGSTSSDVCSSASFKDDLNEFVRHTQENADKQYYVPNPQLDQIMLQSIQMLRFHLLELEKVHELCDNFCNRYVVCLKGKMPLDIVGDERASSSQPPMSPGSMGHLGHSSSPSMAGGATPMHYPPPYEPQSVPLPENAGVMGGHPMEGSSMAYSMAGMAAAAASSSSSSNQAGDHPLANGGTLHSTAGASQTLLPIAVSSPSTCSSGGLRQDSTPLSGETPMGHANGNSMDSISEAGDEFSVCGSNDDGRDSVLSDSANGSQNGKRKVPKVFSKEAITKFRAWLFHNLTHPYPSEEQKKQLAKETGLTILQVNNWFINARRRIVQPMIDQNNRAGRSGQMNVCKNRRRNRSEQSPGPSPDSGSDSGANYSPDPSSLAASTAMPYPAEFYMQRTMPYGGFPSFTNPAMPFMNPMMGFQVAPTVDALSQQWVDLSAPHE.

5 disordered regions span residues 40-59 (NEQF…ADPA), 216-270 (ERAS…VMGG), 293-313 (SSSS…LHST), 328-397 (PSTC…KVPK), and 455-503 (IDQN…PSSL). The region spanning 133 to 218 (SSDVCSSASF…PLDIVGDERA (86 aa)) is the MEIS N-terminal domain. The segment covering 219–230 (SSSQPPMSPGSM) has biased composition (low complexity). Polar residues-rich tracts occupy residues 328-344 (PSTC…TPLS) and 381-390 (LSDSANGSQN). A DNA-binding region (homeobox; TALE-type) is located at residues 392 to 454 (KRKVPKVFSK…NARRRIVQPM (63 aa)). Polar residues-rich tracts occupy residues 455 to 469 (IDQN…QMNV) and 494 to 503 (ANYSPDPSSL).

It belongs to the TALE/MEIS homeobox family. As to quaternary structure, forms a heterodimer with homeobox ceh-60.

Its subcellular location is the nucleus. Its function is as follows. Acts redundantly with ceh-20 and ceh-40 to perform overlapping roles during embryogenesis. Required for postembryonic development of the ectoderm, including the Q, V and P cell lineages, playing a crucial role in ensuring that these cells and their descendants undergo their invariant patterns of cell division, migration, fusion and morphogenesis. Has a role in the mig-13 pathway to promote anterior migration of neuroblasts in the Q lineage. Required for multiple roles in regulating vulva development. Associates with homeobox ceh-60 to regulate gene expression, including repression of genes involved in innate immunity and activation of genes involved in vitellogenesis. Involved in lipid homeostasis, contributing to the formation of the cuticle. The chain is Homeobox protein unc-62 (unc-62) from Caenorhabditis elegans.